A 309-amino-acid polypeptide reads, in one-letter code: Porphobilinogen deaminase (309 aa).

At Cys241 the chain carries S-(dipyrrolylmethanemethyl)cysteine.

The protein belongs to the HMBS family. As to quaternary structure, monomer. It depends on dipyrromethane as a cofactor.

The enzyme catalyses 4 porphobilinogen + H2O = hydroxymethylbilane + 4 NH4(+). The protein operates within porphyrin-containing compound metabolism; protoporphyrin-IX biosynthesis; coproporphyrinogen-III from 5-aminolevulinate: step 2/4. Its function is as follows. Tetrapolymerization of the monopyrrole PBG into the hydroxymethylbilane pre-uroporphyrinogen in several discrete steps. This chain is Porphobilinogen deaminase, found in Geobacillus kaustophilus (strain HTA426).